Consider the following 793-residue polypeptide: Pleckstrin homology domain-containing family H member 3 (793 aa).

The signal sequence occupies residues 1–18; sequence MPLPGGLWWLLCCRRGFT. The segment at 28 to 62 is disordered; it reads ELSGDGDEDEDEETFELRTPSPAGGGRGPLEVTLT. Acidic residues predominate over residues 29-41; sequence LSGDGDEDEDEET. S30 is modified (phosphoserine). Residues 95-199 form the PH domain; it reads DIVVKGWLYR…WGVALREVIA (105 aa). Residues 237–399 enclose the MyTH4 domain; the sequence is HTSGALYAPL…PSLAEISALS (163 aa). In terms of domain architecture, FERM spans 404–754; it reads LLCTVHCPGA…AYLANPSPER (351 aa). 2 disordered regions span residues 554–586 and 598–622; these read VPLP…SAAL and KRRA…EGGG. Over residues 598 to 608 the composition is skewed to basic residues; it reads KRRAERARRGG. Omega-N-methylarginine occurs at positions 638 and 642. Residues 750-762 are compositionally biased toward low complexity; that stretch reads PSPERPCSSSSPP. A disordered region spans residues 750-793; sequence PSPERPCSSSSPPCQDLPDTSPPSQRPGLDEPQGQSGCLGQLQD. A compositionally biased stretch (polar residues) spans 782 to 793; it reads QGQSGCLGQLQD.

This chain is Pleckstrin homology domain-containing family H member 3 (PLEKHH3), found in Homo sapiens (Human).